A 181-amino-acid polypeptide reads, in one-letter code: Crossover junction endodeoxyribonuclease RuvC (181 aa).

Active-site residues include aspartate 7, glutamate 67, and aspartate 139. Mg(2+) contacts are provided by aspartate 7, glutamate 67, and aspartate 139.

Belongs to the RuvC family. As to quaternary structure, homodimer which binds Holliday junction (HJ) DNA. The HJ becomes 2-fold symmetrical on binding to RuvC with unstacked arms; it has a different conformation from HJ DNA in complex with RuvA. In the full resolvosome a probable DNA-RuvA(4)-RuvB(12)-RuvC(2) complex forms which resolves the HJ. The cofactor is Mg(2+).

It is found in the cytoplasm. It catalyses the reaction Endonucleolytic cleavage at a junction such as a reciprocal single-stranded crossover between two homologous DNA duplexes (Holliday junction).. Its function is as follows. The RuvA-RuvB-RuvC complex processes Holliday junction (HJ) DNA during genetic recombination and DNA repair. Endonuclease that resolves HJ intermediates. Cleaves cruciform DNA by making single-stranded nicks across the HJ at symmetrical positions within the homologous arms, yielding a 5'-phosphate and a 3'-hydroxyl group; requires a central core of homology in the junction. The consensus cleavage sequence is 5'-(A/T)TT(C/G)-3'. Cleavage occurs on the 3'-side of the TT dinucleotide at the point of strand exchange. HJ branch migration catalyzed by RuvA-RuvB allows RuvC to scan DNA until it finds its consensus sequence, where it cleaves and resolves the cruciform DNA. This is Crossover junction endodeoxyribonuclease RuvC from Bordetella avium (strain 197N).